The following is a 495-amino-acid chain: Cytochrome P450 monooxygenase cnsC (495 aa).

Cys434 contacts heme.

This sequence belongs to the cytochrome P450 family. It depends on heme as a cofactor.

It participates in alkaloid biosynthesis. Its function is as follows. Cytochrome P450 monooxygenase; part of the gene cluster that mediates the biosynthesis of communesins, a prominent class of indole alkaloids with great potential as pharmaceuticals. Communesins are biosynthesized by the coupling of tryptamine and aurantioclavine, two building blocks derived from L-tryptophan. The L-tryptophan decarboxylase cnsB converts L-tryptophan to tryptamine, whereas the tryptophan dimethylallyltransferase cnsF converts L-tryptophan to 4-dimethylallyl tryptophan which is further transformed to aurantioclavine by the aurantioclavine synthase cnsA, probably aided by the catalase cnsD. The cytochrome P450 monooxygenase cnsC catalyzes the heterodimeric coupling between the two different indole moieties, tryptamine and aurantioclavine, to construct vicinal quaternary stereocenters and yield the heptacyclic communesin scaffold. The O-methyltransferase cnsE then methylates the communesin scaffold to produce communesin K, the simplest characterized communesin that contains the heptacyclic core. The dioxygenase cnsJ converts communesin K into communesin I. Acylation to introduce the hexadienyl group at position N16 of communesin I by the acyltransferase cnsK leads to the production of communesin B. The hexadienyl group is produced by the highly reducing polyketide synthase cnsI, before being hydrolytically removed from cnsI by the serine hydrolase cnsH, converted into hexadienyl-CoA by the CoA ligase cnsG, and then transferred to communesin I by cnsK. Surprisingly, cnsK may also be a promiscuous acyltransferase that can tolerate a range of acyl groups, including acetyl-, propionyl-, and butyryl-CoA, which lead to communesins A, G and H respectively. The roles of the alpha-ketoglutarate-dependent dioxygenases cnsM and cnsP have still to be determined. In Penicillium expansum (Blue mold rot fungus), this protein is Cytochrome P450 monooxygenase cnsC.